A 286-amino-acid polypeptide reads, in one-letter code: ATP synthase gamma chain (286 aa).

This sequence belongs to the ATPase gamma chain family. In terms of assembly, F-type ATPases have 2 components, CF(1) - the catalytic core - and CF(0) - the membrane proton channel. CF(1) has five subunits: alpha(3), beta(3), gamma(1), delta(1), epsilon(1). CF(0) has three main subunits: a, b and c.

Its subcellular location is the cell membrane. In terms of biological role, produces ATP from ADP in the presence of a proton gradient across the membrane. The gamma chain is believed to be important in regulating ATPase activity and the flow of protons through the CF(0) complex. This chain is ATP synthase gamma chain, found in Mycoplasma mobile (strain ATCC 43663 / 163K / NCTC 11711) (Mesomycoplasma mobile).